The sequence spans 528 residues: Calcium-dependent protein kinase 4 (528 aa).

Polar residues predominate over residues 1 to 16 (MGQEMSTQSDMQNENQ). The disordered stretch occupies residues 1 to 36 (MGQEMSTQSDMQNENQKGNKRNLKGSQGKNGLKERS). Gly2 carries N-myristoyl glycine lipidation. The Protein kinase domain maps to 70 to 328 (YKGIKILGKG…ARDALEHEWI (259 aa)). ATP-binding positions include 76–84 (LGKGSFGEV) and Lys99. Residue Asp193 is the Proton acceptor of the active site. A J domain autoinhibitory motif motif is present at residues 350 to 358 (NIKQFQSTQ). The tract at residues 350–386 (NIKQFQSTQKLAQAALLYMGSKLTTIDETKELTKIFK) is j domain. A J domain EF-hand interaction motif motif is present at residues 359 to 368 (KLAQAALLYM). 4 consecutive EF-hand domains span residues 376 to 411 (DETK…LLKL), 423 to 458 (AIEV…RKLL), 459 to 494 (LSTE…GDVS), and 498 to 528 (WKTV…LCNY). The Ca(2+) site is built by Asp389, Asn391, Asp393, Gln395, Glu400, Asp436, Asp438, Asn440, Tyr442, Glu447, Asp472, Asp474, Ser476, Lys478, Glu483, Asp506, Asn508, Asp510, Glu512, and Glu517.

Belongs to the protein kinase superfamily. Ser/Thr protein kinase family. CDPK subfamily. In terms of assembly, may interact with the pre-replication MCM complex prior male gametogenesis activation. Mg(2+) is required as a cofactor. Post-translationally, myristoylated; myristoylation may target it to different subcellular compartments. During male gametogenesis, myristoylation is required to initiate DNA replication but not for mitotic spindle assembly or axoneme activation. In terms of processing, not palmitoylated. May be autophosphorylated on Thr-234 in vitro.

The protein resides in the cytoplasm. Its subcellular location is the membrane. The protein localises to the chromosome. The catalysed reaction is L-seryl-[protein] + ATP = O-phospho-L-seryl-[protein] + ADP + H(+). It catalyses the reaction L-threonyl-[protein] + ATP = O-phospho-L-threonyl-[protein] + ADP + H(+). With respect to regulation, activated by calcium. Upon calcium binding to the EF-hand domains, the C-terminus of the junction domain (J domain) undergoes a conformational change which results in the dissociation of the pseudo-substrate inhibitory motif from the catalytic domain. This, in turn, may facilitate the autophosphorylation of the activation loop at Thr-234, which leads to the kinase activation. Intracellular calcium increase is triggered by xanthurenic acid (XA), a small mosquito molecule that induces the differentiation of specialized transmission stages, the gametocytes, into male and female gametes. Activated by a decrease in temperature (20 degrees Celsius) and an increase in pH (7.6) occurring when the parasite is ingested by in the mosquito. Calcium-dependent protein kinase which acts as a sensor and effector of intracellular Ca(2+) levels probably in part downstream of cGMP-activated PKG kinase. Plays a central role in the host erythrocytes and hepatocytes infection cycles, sexual reproduction and mosquito transmission of the parasite. During the liver stage, involved in sporozoite motility and thus in sporozoite invasion of host hepatocytes, probably together with CDPK1 and CDPK5. Involved in merosome egress from host hepatocytes, probably together with CDPK5. During the asexual blood stage, involved in merozoite invasion of host erythrocytes and motility by stabilizing the inner membrane complex, a structure below the plasma membrane which acts as an anchor for the glidosome, an acto-myosin motor. Required for cell cycle progression in the male gametocyte. During male gametogenesis in the mosquito gut, required to initiate the first round of DNA replication, probably by facilitating the assembly of the pre-replicative MCM complex, to assemble the first mitotic spindle and, at the end of gametogenesis, to initiate axoneme motility, cytokinesis and subsequent exflagellation. For each of these steps, may phosphorylate SOC1, SOC2 and SOC3, respectively. Together with CDPK1, regulates ookinete gliding in the mosquito host midgut. In terms of biological role, during male gametogenesis in the mosquito gut, required to initiate the first round of DNA replication, probably by facilitating the assembly of the pre-replicative MCM complex, and to assemble the first mitotic spindle. Functionally, at the end of male gametogenesis in the mosquito gut, required to initiate axoneme motility, cytokinesis and subsequent exflagellation. In Plasmodium berghei (strain Anka), this protein is Calcium-dependent protein kinase 4.